The chain runs to 497 residues: Glycerol kinase (497 aa).

An ADP-binding site is contributed by T12. ATP contacts are provided by T12, T13, and S14. Position 12 (T12) interacts with sn-glycerol 3-phosphate. R16 is an ADP binding site. Residues R82, E83, Y133, and D243 each contribute to the sn-glycerol 3-phosphate site. Glycerol contacts are provided by R82, E83, Y133, D243, and Q244. ADP-binding residues include T265 and G308. Positions 265, 308, 312, and 409 each coordinate ATP. Residue G409 coordinates ADP.

It belongs to the FGGY kinase family.

It catalyses the reaction glycerol + ATP = sn-glycerol 3-phosphate + ADP + H(+). Its pathway is polyol metabolism; glycerol degradation via glycerol kinase pathway; sn-glycerol 3-phosphate from glycerol: step 1/1. Inhibited by fructose 1,6-bisphosphate (FBP). In terms of biological role, key enzyme in the regulation of glycerol uptake and metabolism. Catalyzes the phosphorylation of glycerol to yield sn-glycerol 3-phosphate. The sequence is that of Glycerol kinase from Dichelobacter nodosus (strain VCS1703A).